Consider the following 743-residue polypeptide: MTISNSVPITPELIAAHGLKPDEYQRILDLVGREPSFTELGIFSAMWNEHCSYKSSKKWLRTLPTTGPQVIQGPGENAGVVDIGDGDCVVFKMESHNHPSFIEPYQGAATGVGGILRDVFTMGARPIAAMNALRFGAPDHPKTRHLVAGVVSGVGGYGNSFGVPTVGGEVNFDARYNGNILVNAFAAGLAKTNAIFLSEAKGVGLPVVYLGAKTGRDGVGGATMASAEFDDKIDEKRPTVQVGDPFTEKCLLEACLELMASGAVIAIQDMGAAGLTCSAVEMGAKGDLGIELDLDKVPVREERMSAYEMMLSESQERMLMVLRPEKEKEAEAIFHKWGLDFAIVGKTTDDLRFRVLHQGDQVADLPIKDLGDKAPEYDRPWIEPKKPAPLAANDIPQADVADALLKLLGGPDLSSRRWVWEQYDTLIQGNSLQLPGGDAGVVRVEGHATKALAFSSDVTPRYCEADPYEGGKQAVAECWRNLTATGALPLAATDNLNFGNPERPEIMGQLVGAVKGIGDACRALGFPIVSGNVSLYNETNGQGILPTPTIGGVGLIADWSKMVRTGFAAQDQMILLVGAPASWGTHLGQSVYFRDIHGRTDGPPPPVDLAHEKRVGDHVRSLIASGIVTAAHDVSDGGIAVALAEMAMASGIGATVPGLVGTDPIPVWFGEDQGRYLLTLSIDPHGDEWDAIRKQQGELGIFAPWIGSTGGDALKLGDAKAIPVGDLKAAHEGWFPRFMDQAS.

The active site involves histidine 50. ATP is bound by residues tyrosine 53 and lysine 92. Residue glutamate 94 participates in Mg(2+) binding. Residues 95–98 (SHNH) and arginine 117 each bind substrate. Histidine 96 serves as the catalytic Proton acceptor. Position 118 (aspartate 118) interacts with Mg(2+). Residue glutamine 241 coordinates substrate. Aspartate 269 is a binding site for Mg(2+). Residue 313–315 (ESQ) coordinates substrate. Residues aspartate 494 and glycine 531 each contribute to the ATP site. Asparagine 532 serves as a coordination point for Mg(2+). A substrate-binding site is contributed by serine 534.

Belongs to the FGAMS family. In terms of assembly, monomer. Part of the FGAM synthase complex composed of 1 PurL, 1 PurQ and 2 PurS subunits.

The protein resides in the cytoplasm. The catalysed reaction is N(2)-formyl-N(1)-(5-phospho-beta-D-ribosyl)glycinamide + L-glutamine + ATP + H2O = 2-formamido-N(1)-(5-O-phospho-beta-D-ribosyl)acetamidine + L-glutamate + ADP + phosphate + H(+). The protein operates within purine metabolism; IMP biosynthesis via de novo pathway; 5-amino-1-(5-phospho-D-ribosyl)imidazole from N(2)-formyl-N(1)-(5-phospho-D-ribosyl)glycinamide: step 1/2. Part of the phosphoribosylformylglycinamidine synthase complex involved in the purines biosynthetic pathway. Catalyzes the ATP-dependent conversion of formylglycinamide ribonucleotide (FGAR) and glutamine to yield formylglycinamidine ribonucleotide (FGAM) and glutamate. The FGAM synthase complex is composed of three subunits. PurQ produces an ammonia molecule by converting glutamine to glutamate. PurL transfers the ammonia molecule to FGAR to form FGAM in an ATP-dependent manner. PurS interacts with PurQ and PurL and is thought to assist in the transfer of the ammonia molecule from PurQ to PurL. This Mesorhizobium japonicum (strain LMG 29417 / CECT 9101 / MAFF 303099) (Mesorhizobium loti (strain MAFF 303099)) protein is Phosphoribosylformylglycinamidine synthase subunit PurL.